Here is a 312-residue protein sequence, read N- to C-terminus: Olfactory receptor 14C36 (312 aa).

At 1–23 (MPNSTTVMEFLLMRFSDVWTLQI) the chain is on the extracellular side. N3 is a glycosylation site (N-linked (GlcNAc...) asparagine). The helical transmembrane segment at 24-44 (LHSASFFMLYLVTLMGNILIV) threads the bilayer. Topologically, residues 45–52 (TVTTCDSS) are cytoplasmic. A helical membrane pass occupies residues 53–73 (LHMPMYFFLRNLSILDACYIS). Over 74–97 (VTVPTSCVNSLLDSTTISKAGCVA) the chain is Extracellular. C95 and C187 are disulfide-bonded. Residues 98 to 118 (QVFLVVFFVYVELLFLTIMAH) traverse the membrane as a helical segment. The Cytoplasmic segment spans residues 119-137 (DRYVAVCQPLHYPVIVNSR). Residues 138 to 158 (ICIQMTLASLLSGLVYAGMHT) traverse the membrane as a helical segment. The Extracellular portion of the chain corresponds to 159–194 (GSTFQLPFCRSNVIHQFFCDIPSLLKLSCSDTFSNE). The chain crosses the membrane as a helical span at residues 195–215 (VMIVVSALGVGGGCFIFIIRS). Over 216 to 235 (YIHIFSTVLGFPRGADRTKA) the chain is Cytoplasmic. The chain crosses the membrane as a helical span at residues 236–256 (FSTCIPHILVVSVFLSSCSSV). Residues 257–269 (YLRPPAIPAATQD) are Extracellular-facing. A helical membrane pass occupies residues 270 to 290 (LILSGFYSIMPPLFNPIIYSL). At 291-312 (RNKQIKVAIKKIMKRIFYSENV) the chain is on the cytoplasmic side.

Belongs to the G-protein coupled receptor 1 family.

Its subcellular location is the cell membrane. In terms of biological role, odorant receptor. In Homo sapiens (Human), this protein is Olfactory receptor 14C36 (OR14C36).